The following is a 179-amino-acid chain: Cytochrome b6-f complex iron-sulfur subunit (179 aa).

A helical membrane pass occupies residues 21–43; that stretch reads LLTFGSATGVALGMLYPVVRYFI. Residues 61–162 form the Rieske domain; the sequence is GNDISVSDFL…AAVSDDKITF (102 aa). [2Fe-2S] cluster-binding residues include Cys108, His110, Cys126, and His129. Cys113 and Cys128 form a disulfide bridge.

It belongs to the Rieske iron-sulfur protein family. The 4 large subunits of the cytochrome b6-f complex are cytochrome b6, subunit IV (17 kDa polypeptide, PetD), cytochrome f and the Rieske protein, while the 4 small subunits are PetG, PetL, PetM and PetN. The complex functions as a dimer. It depends on [2Fe-2S] cluster as a cofactor.

The protein localises to the cellular thylakoid membrane. The enzyme catalyses 2 oxidized [plastocyanin] + a plastoquinol + 2 H(+)(in) = 2 reduced [plastocyanin] + a plastoquinone + 4 H(+)(out). In terms of biological role, component of the cytochrome b6-f complex, which mediates electron transfer between photosystem II (PSII) and photosystem I (PSI), cyclic electron flow around PSI, and state transitions. This chain is Cytochrome b6-f complex iron-sulfur subunit, found in Cyanothece sp. (strain PCC 7425 / ATCC 29141).